Here is a 216-residue protein sequence, read N- to C-terminus: MRCKGFLFDLDGTLVDSLPAVERAWSNWARRHGLAPEEVLAFIHGKQAITSLRHFMAGKSEADIAAEFTRLEHIEATETEGITALPGAIALLSHLNKAGIPWAIVTSGSMPVARARHKIAGLPAPEVFVTAERVKRGKPEPDAYLLGAQLLGLAPQECVVVEDAPAGVLSGLAAGCHVIAVNAPADTPRLNEVDLVLHSLEQITVTKQPNGDVIIQ.

Catalysis depends on D9, which acts as the Nucleophile. A divalent metal cation-binding residues include D9 and D11. Substrate contacts are provided by residues 9-11 (DLD), 106-107 (TS), and K138. D11 acts as the Proton donor in catalysis. D163 provides a ligand contact to a divalent metal cation.

This sequence belongs to the HAD-like hydrolase superfamily. CbbY/CbbZ/Gph/YieH family. Mg(2+) serves as cofactor. The cofactor is Mn(2+). Co(2+) is required as a cofactor.

The enzyme catalyses sugar phosphate + H2O = sugar + phosphate.. It catalyses the reaction D-mannitol 1-phosphate + H2O = D-mannitol + phosphate. The catalysed reaction is D-sorbitol 6-phosphate + H2O = D-sorbitol + phosphate. In terms of biological role, sugar-phosphate phosphohydrolase that appears to contribute to butanol tolerance. Catalyzes the dephosphorylation of D-mannitol 1-phosphate and D-sorbitol 6-phosphate. Is also able to dephosphorylate other sugar phosphates in vitro including ribose-5-phosphate (Rib5P), 2-deoxyribose-5-phosphate, fructose-1-phosphate (Fru1P), fructose-6-phosphate (Fru6P), and glucose-6-phosphate (Glu6P). Selectively hydrolyzes beta-D-glucose-1-phosphate (bGlu1P) and has no activity with the alpha form. This is Hexitol phosphatase A from Escherichia coli (strain K12).